The sequence spans 314 residues: Probable dimethyladenosine transferase (314 aa).

Positions 36, 38, 63, 84, 112, and 127 each coordinate S-adenosyl-L-methionine.

It belongs to the class I-like SAM-binding methyltransferase superfamily. rRNA adenine N(6)-methyltransferase family. In terms of assembly, part of the small subunit (SSU) processome, composed of more than 70 proteins and the RNA chaperone small nucleolar RNA (snoRNA) U3.

It is found in the nucleus. It localises to the nucleoplasm. The protein resides in the nucleolus. It carries out the reaction adenosine(1779)/adenosine(1780) in 18S rRNA + 4 S-adenosyl-L-methionine = N(6)-dimethyladenosine(1779)/N(6)-dimethyladenosine(1780) in 18S rRNA + 4 S-adenosyl-L-homocysteine + 4 H(+). Specifically dimethylates two adjacent adenosines in the loop of a conserved hairpin near the 3'-end of 18S rRNA in the 40S particle. Involved in the pre-rRNA processing steps leading to small-subunit rRNA production independently of its RNA-modifying catalytic activity. Part of the small subunit (SSU) processome, first precursor of the small eukaryotic ribosomal subunit. During the assembly of the SSU processome in the nucleolus, many ribosome biogenesis factors, an RNA chaperone and ribosomal proteins associate with the nascent pre-rRNA and work in concert to generate RNA folding, modifications, rearrangements and cleavage as well as targeted degradation of pre-ribosomal RNA by the RNA exosome. In Dictyostelium discoideum (Social amoeba), this protein is Probable dimethyladenosine transferase (dimt1).